A 645-amino-acid polypeptide reads, in one-letter code: Protein disulfide-isomerase A4 (645 aa).

Positions 1 to 20 are cleaved as a signal peptide; the sequence is MRPRKAFLLLLLLGLVQLLA. 2 Thioredoxin domains span residues 21–169 and 158–301; these read VAGA…EVSQ and EEIV…EFLK. Residues 24 to 58 are disordered; sequence AEGPDEDSSNRENAIEDEEEEEEEDDDEEEDDLEV. The span at 38–58 shows a compositional bias: acidic residues; sequence IEDEEEEEEEDDDEEEDDLEV. A CXXC motif is present at residues 91–94; sequence CGHC. Cystine bridges form between C91–C94 and C206–C209. Residue K366 is modified to N6-acetyllysine. Residues 505-636 enclose the Thioredoxin 3 domain; sequence FKKGKLKPVI…LSKFIEEHAT (132 aa). The CXXC motif lies at 555–558; that stretch reads CGHC. Residues C555 and C558 are joined by a disulfide bond. Positions 642–645 match the Prevents secretion from ER motif; sequence KEEL.

Belongs to the protein disulfide isomerase family. As to quaternary structure, part of a large chaperone multiprotein complex comprising DNAJB11, HSP90B1, HSPA5, HYOU, PDIA2, PDIA4, PDIA6, PPIB, SDF2L1, UGGT1 and very small amounts of ERP29, but not, or at very low levels, CALR nor CANX. Component of a complex containing at least CRELD2, MANF, MATN3 and PDIA4. (Microbial infection) Interacts with Human astrovirus-1 and Human astrovirus-8 spike protein VP25; this interaction seems to facilitate the uncoating during virus entry into the cell. Does not interact with Human astrovirus-2 spike protein VP25.

It is found in the endoplasmic reticulum lumen. The protein resides in the melanosome. The catalysed reaction is Catalyzes the rearrangement of -S-S- bonds in proteins.. The sequence is that of Protein disulfide-isomerase A4 (PDIA4) from Homo sapiens (Human).